Consider the following 392-residue polypeptide: MKFVDEAEIRVEAGDGGNGVIGFRREKYVPKGGPDGGDGGDGGSVFLQADENLNTLIDYRFERFHRAERGQNGQGSNCIGKKGQDLTVMVPVGTRATDSDTGEVLGDLTRHGQKLKVAQGGFHGLGNTRFKSSTNRAPRQKTNGTPGEIRNLKLELMLLADVGLLGMPNAGKSTFIRSVSAAKPKVADYPFTTLVPNLGVVRQDAQRSFVVADIPGLIEGAADGAGLGIRFLKHLERCRILLHVVDIFPVDETDPADNAKAIIEELEKYSPKLAQKPRWLVFNKVDLLLEEEVEERCQHVIDALGWEGPVYQISAFQKMNLDPLCNDVMDFIETLPAETEQEEEKKEVEFKWDTYHKNTLEAHDEFEDDLGDDLDDDDWDEDDYDVEVEYRR.

The Obg domain occupies 1–159 (MKFVDEAEIR…RNLKLELMLL (159 aa)). Residues 121 to 146 (GFHGLGNTRFKSSTNRAPRQKTNGTP) form a disordered region. Over residues 129 to 145 (RFKSSTNRAPRQKTNGT) the composition is skewed to polar residues. The region spanning 160–333 (ADVGLLGMPN…LCNDVMDFIE (174 aa)) is the OBG-type G domain. GTP contacts are provided by residues 166 to 173 (GMPNAGKS), 191 to 195 (FTTLV), 213 to 216 (DIPG), 283 to 286 (NKVD), and 314 to 316 (SAF). 2 residues coordinate Mg(2+): Ser173 and Thr193.

It belongs to the TRAFAC class OBG-HflX-like GTPase superfamily. OBG GTPase family. In terms of assembly, monomer. Mg(2+) is required as a cofactor.

Its subcellular location is the cytoplasm. An essential GTPase which binds GTP, GDP and possibly (p)ppGpp with moderate affinity, with high nucleotide exchange rates and a fairly low GTP hydrolysis rate. Plays a role in control of the cell cycle, stress response, ribosome biogenesis and in those bacteria that undergo differentiation, in morphogenesis control. This is GTPase Obg from Alteromonas mediterranea (strain DSM 17117 / CIP 110805 / LMG 28347 / Deep ecotype).